A 178-amino-acid chain; its full sequence is Histone H3-like centromeric protein CENH3 (178 aa).

Residues 1 to 81 (MARTKHRVTR…GSQKKSYRYR (81 aa)) are disordered. An N6,N6,N6-trimethyllysine; alternate modification is found at K5. K5 bears the N6,N6-dimethyllysine; alternate mark. Position 5 is an N6-methyllysine; alternate (K5). Phosphoserine is present on S11. Positions 16-36 (QTDAAGASSSQAAGPTTTPTR) are enriched in low complexity. Residues 43 to 56 (DNTQQTNPTTSPAT) show a composition bias toward polar residues. N6-methyllysine; alternate is present on residues K63 and K75. Position 63 is an N6-acetyllysine; alternate (K63). An N6,N6,N6-trimethyllysine; alternate modification is found at K75. At K75 the chain carries N6,N6-dimethyllysine; alternate.

It belongs to the histone H3 family. As to quaternary structure, forms a nucleosome-like histone octamer containing two molecules each of H2A, H2B, CENH3 and H4 assembled in one CENH3-H4 heterotetramer and two H2A-H2B heterodimers. Interacts with ORTH2.

The protein localises to the chromosome. It localises to the centromere. The protein resides in the kinetochore. Histone H3-like variant which exclusively replaces conventional H3 in the nucleosome core of centromeric chromatin at the inner plate of the kinetochore. Required for recruitment and assembly of kinetochore proteins, mitotic progression and chromosome segregation. May serve as an epigenetic mark that propagates centromere identity through replication and cell division. The chain is Histone H3-like centromeric protein CENH3 from Arabidopsis thaliana (Mouse-ear cress).